The following is a 139-amino-acid chain: Putative pre-16S rRNA nuclease (139 aa).

This sequence belongs to the YqgF nuclease family.

The protein resides in the cytoplasm. Functionally, could be a nuclease involved in processing of the 5'-end of pre-16S rRNA. The chain is Putative pre-16S rRNA nuclease from Streptococcus agalactiae serotype Ia (strain ATCC 27591 / A909 / CDC SS700).